The primary structure comprises 390 residues: L-serine phosphate decarboxylase Cj1436c (390 aa).

N6-(pyridoxal phosphate)lysine is present on Lys243.

The protein belongs to the class-I pyridoxal-phosphate-dependent aminotransferase family. It depends on pyridoxal 5'-phosphate as a cofactor.

The enzyme catalyses O-phospho-L-serine + H(+) = phosphoethanolamine + CO2. It participates in capsule biogenesis; capsule polysaccharide biosynthesis. In terms of biological role, pyridoxal phosphate (PLP)-dependent decarboxylase involved in the biosynthesis of amidated D-glucuronic acid structures found on the capsular polysaccharide (CPS) of C.jejuni. Catalyzes the decarboxylation of L-serine phosphate to ethanolamine phosphate. Less active with L-threonine phosphate. No activity with L-serine, L-threonine, L-aspartate or L-glutamate. This chain is L-serine phosphate decarboxylase Cj1436c, found in Campylobacter jejuni subsp. jejuni serotype O:2 (strain ATCC 700819 / NCTC 11168).